Here is a 257-residue protein sequence, read N- to C-terminus: Leucine-rich repeat-containing protein 3 (257 aa).

A signal peptide spans 1 to 32; sequence MGTVRPPRPSLLLVSTRESCLFLLFCLHLGAA. The 32-residue stretch at 33-64 folds into the LRRNT domain; that stretch reads CPQPCRCPDHAGAVAVFCSLRGLQEVPEDIPA. 4 LRR repeats span residues 65–86, 89–110, 114–135, and 136–157; these read NTVL…AFQH, RLRE…TFAG, GLRL…ALGK, and LSAK…QEAL. The helical transmembrane segment at 205-225 threads the bilayer; that stretch reads VAMLVTMFGWFAMVIAYVVYY.

It belongs to the LRRC3 family. As to expression, widely expressed; detected in testis, lung, small intestine, breast, brain, heart, bone marrow, placenta, colon, fetal brain, liver, fetal liver, thymus, salivary gland, spinal cord, spleen, trachea and adrenal gland.

Its subcellular location is the membrane. The polypeptide is Leucine-rich repeat-containing protein 3 (LRRC3) (Homo sapiens (Human)).